A 174-amino-acid polypeptide reads, in one-letter code: Ribosome maturation factor RimM (174 aa).

Residues 97–171 form the PRC barrel domain; that stretch reads EGYYYDFDII…RMVIDPIPGL (75 aa).

It belongs to the RimM family. As to quaternary structure, binds ribosomal protein uS19.

It localises to the cytoplasm. Its function is as follows. An accessory protein needed during the final step in the assembly of 30S ribosomal subunit, possibly for assembly of the head region. Essential for efficient processing of 16S rRNA. May be needed both before and after RbfA during the maturation of 16S rRNA. It has affinity for free ribosomal 30S subunits but not for 70S ribosomes. The chain is Ribosome maturation factor RimM from Symbiobacterium thermophilum (strain DSM 24528 / JCM 14929 / IAM 14863 / T).